A 454-amino-acid chain; its full sequence is Oxygen-dependent coproporphyrinogen-III oxidase, mitochondrial (454 aa).

The N-terminal 110 residues, 1 to 110, are a transit peptide targeting the mitochondrion; that stretch reads MALQLGRLSS…MLPKTSGTRA (110 aa). Residues 43-70 are disordered; sequence AAGRVCRPPGPAGTEQSRGLGHGSTSRG. Ser-112 is modified (phosphoserine). An important for dimerization region spans residues 193 to 202; that stretch reads VLQDGCVFEK. Ser-244 serves as a coordination point for coproporphyrinogen III. His-258 functions as the Proton donor in the catalytic mechanism. Residue 260–262 participates in coproporphyrinogen III binding; sequence NYR. The segment at 392–428 is important for dimerization; sequence YVEFNLLYDRGTKFGLFTPGSRIESILMSLPLTARWE. Lys-404 carries the post-translational modification N6-acetyllysine; alternate. At Lys-404 the chain carries N6-succinyllysine; alternate. 411-413 contacts coproporphyrinogen III; sequence GSR.

This sequence belongs to the aerobic coproporphyrinogen-III oxidase family. As to quaternary structure, homodimer.

The protein localises to the mitochondrion intermembrane space. It catalyses the reaction coproporphyrinogen III + O2 + 2 H(+) = protoporphyrinogen IX + 2 CO2 + 2 H2O. It functions in the pathway porphyrin-containing compound metabolism; protoporphyrin-IX biosynthesis; protoporphyrinogen-IX from coproporphyrinogen-III (O2 route): step 1/1. In terms of biological role, catalyzes the aerobic oxidative decarboxylation of propionate groups of rings A and B of coproporphyrinogen-III to yield the vinyl groups in protoporphyrinogen-IX and participates to the sixth step in the heme biosynthetic pathway. The chain is Oxygen-dependent coproporphyrinogen-III oxidase, mitochondrial from Homo sapiens (Human).